We begin with the raw amino-acid sequence, 515 residues long: Forkhead box protein H1 (515 aa).

Positions 55-103 (YREGGTWSPDRGSMHGLSPGTQEGSCTQAEGTKDSLGGDETLSRKSKKK) are disordered. The span at 73–84 (PGTQEGSCTQAE) shows a compositional bias: polar residues. Positions 110 to 206 (KPPYSYLAMI…MKLQNTALTR (97 aa)) form a DNA-binding region, fork-head. Positions 307–399 (YPQSKPTRNG…EPPKKMPLLS (93 aa)) are disordered. The span at 322–339 (SASHSTYSSSSSSISTIS) shows a compositional bias: low complexity. The segment covering 375–388 (STPSSDTDAGNYSP) has biased composition (polar residues). An SMAD-interaction domain (SID) region spans residues 377-503 (PSSDTDAGNY…PSFLGQCLGS (127 aa)). Residues 402-406 (LPTSY) carry the Fast/FoxH1 motif 1 (FM1) motif. A Fast/FoxH1 motif 2 (FM2) motif is present at residues 412 to 418 (PNVVAPP). An SMAD-interaction motif (SIM) motif is present at residues 467–488 (LDNMLKTVPPNKSVFDVLTSHP).

As to quaternary structure, ARF1 contains 2 smad2s, 1 smad4 and 1 foxh1/fast-1 protein. Interaction with smad4 is most likely indirect through interaction with the MH2 domain of smad2. Binds to the MH2 domain of smad3, which can incorporate into the ARF1 complex. The ARF1 and ARF2 complexes are activated by distinct TGF-beta family members; formation of ARF1 is promoted by activin. Interacts (via Fork-head domain) with gtf2ird1/wbscr11 (via repeats 4-5).

The protein resides in the nucleus. Transcriptional activator. Recognizes and binds to the DNA sequence 5'-TGT[GT][GT]ATT-3'. Upon TGF-beta induction, forms a transcriptionally active complex with smad2 and smad4 called activin-responsive factor 1 (ARF1), which binds a site on the mix-B/mix.2 promoter called the activin response element (ARE). Binds to activated smads and the ARE with much lower affinity than fast3. Necessary for the first steps in mesoderm specification, directly inducing mesodermal genes. Acts with fast3 to control the convergent extension movements of gastrulation. Binds to the proximal element (PE) of the gsc gene and cooperates with gtf2ird1/wbscr11 and SMAD proteins to regulate gsc transcription. The sequence is that of Forkhead box protein H1 from Xenopus tropicalis (Western clawed frog).